Consider the following 278-residue polypeptide: Envelope glycoprotein L (278 aa).

An N-terminal signal peptide occupies residues 1–30; it reads MCRRPDCGFSFSPGPVILLWCCLLLPIVSS. The gL betaherpesvirus-type domain occupies 43 to 256; it reads VPAECPELTR…DKYYAGLPPE (214 aa). Residues cysteine 154 and cysteine 159 are joined by a disulfide bond.

This sequence belongs to the herpesviridae glycoprotein L (gL) family. Betaherpesvirinae gL subfamily. Interacts with glycoprotein H (gH); this interaction is necessary for the correct processing and cell surface expression of gH. Forms the envelope pentamer complex (PC) composed of gH, gL, UL128, UL130, and UL131A. The pentamer interacts with host NRP2. Forms the envelope trimer complex composed of gH, gL, and gO. The trimer interacts with host PDGFRA.

It is found in the virion membrane. It localises to the host cell membrane. Its subcellular location is the host Golgi apparatus. The protein localises to the host trans-Golgi network. Functionally, the heterodimer glycoprotein H-glycoprotein L is required for the fusion of viral and plasma membranes leading to virus entry into the host cell. Acts as a functional inhibitor of gH and maintains gH in an inhibited form. Upon binding to host integrins, gL dissociates from gH leading to activation of the viral fusion glycoproteins gB and gH. In human cytomegalovirus, forms two distincts complexes to mediate viral entry, a trimer and a pentamer at the surface of the virion envelope. The gH-gL-gO trimer is required for infection in fibroblasts by interacting with host PDGFRA. The gH-gL-UL128-UL130-UL131A pentamer is essential for viral entry in epithelial, endothelial and myeloid cells via interaction with host NRP2. The polypeptide is Envelope glycoprotein L (Human cytomegalovirus (strain PT) (HHV-5)).